Consider the following 170-residue polypeptide: ATP synthase subunit b (170 aa).

A helical transmembrane segment spans residues 3-23 (IKILFFLALPFLAYASEHGGT).

Belongs to the ATPase B chain family. In terms of assembly, F-type ATPases have 2 components, F(1) - the catalytic core - and F(0) - the membrane proton channel. F(1) has five subunits: alpha(3), beta(3), gamma(1), delta(1), epsilon(1). F(0) has three main subunits: a(1), b(2) and c(10-14). The alpha and beta chains form an alternating ring which encloses part of the gamma chain. F(1) is attached to F(0) by a central stalk formed by the gamma and epsilon chains, while a peripheral stalk is formed by the delta and b chains.

The protein localises to the cell inner membrane. In terms of biological role, f(1)F(0) ATP synthase produces ATP from ADP in the presence of a proton or sodium gradient. F-type ATPases consist of two structural domains, F(1) containing the extramembraneous catalytic core and F(0) containing the membrane proton channel, linked together by a central stalk and a peripheral stalk. During catalysis, ATP synthesis in the catalytic domain of F(1) is coupled via a rotary mechanism of the central stalk subunits to proton translocation. Its function is as follows. Component of the F(0) channel, it forms part of the peripheral stalk, linking F(1) to F(0). This chain is ATP synthase subunit b, found in Campylobacter concisus (strain 13826).